Here is a 366-residue protein sequence, read N- to C-terminus: MNKVVLLCRPGFEKECAAEITDKAGQREIFGFARVKENAGYVIYECYQPDDGDKLIRELPFSSLIFARQWFVVGELLQHLPPEDRITPIVGMLQGVVEKGGELRVEVADTNESKELLKFCRKFTVPLRAALRDAGVLANYETPKRPVVHVFFIAPGCCYTGYSYSSNNSPFYMGIPRLKFPADAPSRSTLKLEEAFHVFIPADEWDERLANGMWAVDLGACPGGWTYQLVKRNMWVYSVDNGPMAQSLMDTGQVTWLREDGFKFRPTRSNISWMVCDMVEKPAKVAALMAQWLVNGWCRETIFNLKLPMKKRYEEVSHNLAYIQAQLDEHGINAQIQARQLYHDREEVTVHVRRIWAAVGGRRDER.

Residues S188, 221–224 (CPGG), D240, D260, and D277 contribute to the S-adenosyl-L-methionine site. K306 (proton acceptor) is an active-site residue.

It belongs to the class I-like SAM-binding methyltransferase superfamily. RNA methyltransferase RlmE family. RlmM subfamily. In terms of assembly, monomer.

It is found in the cytoplasm. It carries out the reaction cytidine(2498) in 23S rRNA + S-adenosyl-L-methionine = 2'-O-methylcytidine(2498) in 23S rRNA + S-adenosyl-L-homocysteine + H(+). In terms of biological role, catalyzes the 2'-O-methylation at nucleotide C2498 in 23S rRNA. In Escherichia coli O127:H6 (strain E2348/69 / EPEC), this protein is Ribosomal RNA large subunit methyltransferase M.